The sequence spans 1077 residues: Error-prone DNA polymerase (1077 aa).

This sequence belongs to the DNA polymerase type-C family. DnaE2 subfamily.

The protein resides in the cytoplasm. The catalysed reaction is DNA(n) + a 2'-deoxyribonucleoside 5'-triphosphate = DNA(n+1) + diphosphate. In terms of biological role, DNA polymerase involved in damage-induced mutagenesis and translesion synthesis (TLS). It is not the major replicative DNA polymerase. In Brucella melitensis biotype 1 (strain ATCC 23456 / CCUG 17765 / NCTC 10094 / 16M), this protein is Error-prone DNA polymerase.